We begin with the raw amino-acid sequence, 330 residues long: MSKVSFIGGGSFGTALAILLAEKGNTVSIYNRDKKVVDDININRRNDKYIKNLQVPSNIKAFDNLEKATEDAEYIVLAIPSHTIRSICKQLKNKIKQETIIISIAKGIEEHTDKRLSLVIKEELNNPIVVLSGPSHAEEVVLKLPTTLVVSSENMNAASEAQNLFMTSFFRVYTNEDLVGVEVGGAVKNIIALAAGILDGLGYGDNTKAALMTRGMKEISRIGSALGGKEETFYGLTGMGDLIVTCTSNHSRNRKAGLLIGSGMDVNKAIEKIGMVVEGVKACKAFYELKEKIGVSMPITDILYKVLFEKKDPKSGIEELMLREKKSEIF.

NADPH-binding residues include Ser11, Phe12, Arg32, and Lys106. Lys106, Gly133, and Ser135 together coordinate sn-glycerol 3-phosphate. NADPH is bound at residue Ala137. Residues Lys188, Asp241, Ser251, Arg252, and Asn253 each coordinate sn-glycerol 3-phosphate. The active-site Proton acceptor is the Lys188. Arg252 is an NADPH binding site. 2 residues coordinate NADPH: Val276 and Glu278.

Belongs to the NAD-dependent glycerol-3-phosphate dehydrogenase family.

It is found in the cytoplasm. It catalyses the reaction sn-glycerol 3-phosphate + NAD(+) = dihydroxyacetone phosphate + NADH + H(+). The enzyme catalyses sn-glycerol 3-phosphate + NADP(+) = dihydroxyacetone phosphate + NADPH + H(+). Its pathway is membrane lipid metabolism; glycerophospholipid metabolism. Its function is as follows. Catalyzes the reduction of the glycolytic intermediate dihydroxyacetone phosphate (DHAP) to sn-glycerol 3-phosphate (G3P), the key precursor for phospholipid synthesis. The chain is Glycerol-3-phosphate dehydrogenase [NAD(P)+] from Clostridium botulinum (strain Alaska E43 / Type E3).